Consider the following 266-residue polypeptide: UPF0328 protein ECU03_0130 (266 aa).

The protein belongs to the UPF0328 family.

This chain is UPF0328 protein ECU03_0130, found in Encephalitozoon cuniculi (strain GB-M1) (Microsporidian parasite).